The chain runs to 386 residues: Succinate--CoA ligase [ADP-forming] subunit beta (386 aa).

Residues 9 to 244 (KDLLASYDVP…PSQENVRDVL (236 aa)) enclose the ATP-grasp domain. Residues lysine 46, 53–55 (GRG), valine 102, and glutamate 107 contribute to the ATP site. Residues asparagine 199 and aspartate 213 each contribute to the Mg(2+) site. Residues asparagine 264 and 321–323 (GIM) contribute to the substrate site.

The protein belongs to the succinate/malate CoA ligase beta subunit family. Heterotetramer of two alpha and two beta subunits. Mg(2+) serves as cofactor.

The enzyme catalyses succinate + ATP + CoA = succinyl-CoA + ADP + phosphate. It catalyses the reaction GTP + succinate + CoA = succinyl-CoA + GDP + phosphate. It functions in the pathway carbohydrate metabolism; tricarboxylic acid cycle; succinate from succinyl-CoA (ligase route): step 1/1. Its function is as follows. Succinyl-CoA synthetase functions in the citric acid cycle (TCA), coupling the hydrolysis of succinyl-CoA to the synthesis of either ATP or GTP and thus represents the only step of substrate-level phosphorylation in the TCA. The beta subunit provides nucleotide specificity of the enzyme and binds the substrate succinate, while the binding sites for coenzyme A and phosphate are found in the alpha subunit. This is Succinate--CoA ligase [ADP-forming] subunit beta from Chlamydia pneumoniae (Chlamydophila pneumoniae).